Consider the following 491-residue polypeptide: Nicotinamide phosphoribosyltransferase (491 aa).

Residue Met1 is modified to N-acetylmethionine. A Phosphotyrosine modification is found at Tyr188. Arg196 contributes to the diphosphate binding site. Asp219 serves as a coordination point for beta-nicotinamide D-ribonucleotide. Diphosphate is bound by residues His247 and Arg311. Residues 311-313 (RPD), 353-354 (GD), Gly384, and Arg392 contribute to the beta-nicotinamide D-ribonucleotide site. Ser472 bears the Phosphoserine mark.

It belongs to the NAPRTase family. As to quaternary structure, homodimer.

It is found in the nucleus. It localises to the cytoplasm. Its subcellular location is the secreted. It catalyses the reaction beta-nicotinamide D-ribonucleotide + diphosphate = 5-phospho-alpha-D-ribose 1-diphosphate + nicotinamide + H(+). Its pathway is cofactor biosynthesis; NAD(+) biosynthesis; nicotinamide D-ribonucleotide from 5-phospho-alpha-D-ribose 1-diphosphate and nicotinamide: step 1/1. Functionally, catalyzes the condensation of nicotinamide with 5-phosphoribosyl-1-pyrophosphate to yield nicotinamide mononucleotide, an intermediate in the biosynthesis of NAD. It is the rate limiting component in the mammalian NAD biosynthesis pathway. The secreted form behaves both as a cytokine with immunomodulating properties and an adipokine with anti-diabetic properties, it has no enzymatic activity, partly because of lack of activation by ATP, which has a low level in extracellular space and plasma. Plays a role in the modulation of circadian clock function. Plays a role in the modulation of circadian clock function. NAMPT-dependent oscillatory production of NAD regulates oscillation of clock target gene expression by releasing the core clock component: CLOCK-BMAL1 heterodimer from NAD-dependent SIRT1-mediated suppression. The polypeptide is Nicotinamide phosphoribosyltransferase (NAMPT) (Sus scrofa (Pig)).